The primary structure comprises 548 residues: MNPSTAQARVVVDELIRGGVRDVVLCPGSRNAPLAFALHDADRAGRLRLHVRIDERTAGFLAIGLAVAERAPVCVAMTSGTAVANLGPAVVEANYARVPLIVLSANRPYELLGTGANQTFEQLGYFGTQVRANISLGLAPESGASALNFSALNGQWRSATCRVVVAATGARSANAGPVQFDIPLREPLVPDAQEPAVPYAPDGRPDGRPWTYTPPVTFDQPLDIDLTPDTVVIAGHGAGVHPNLAHLPTVAEPTAPAAQTPLHPLALRMIRPEQVIMLGRPTLHRPVSALLADPAVPVFALTTGPRWPDVSGNSQATGTRAVTAGAPAQAWLRRCAEANRHAVDAVRGQLAAHPLTTGLHVAAAVADALRPGDQLVLGASNPVRDIALVGFHTADVKVRSNRGVAGIDGTVSTAIGAALAHERSGGRTVALIGDLTFVHDSSGLLIGPTEPTPRKLTIVVSNDNGGGIFELLEQGDPRFSDVSSRIFGTPHDVDVGALCRAYHVESRQIEVGELAGALDEDFDGMRVLEVKADRSSLRALHASIRANL.

Belongs to the TPP enzyme family. MenD subfamily. Homodimer. The cofactor is Mg(2+). Requires Mn(2+) as cofactor. Thiamine diphosphate serves as cofactor.

The catalysed reaction is isochorismate + 2-oxoglutarate + H(+) = 5-enolpyruvoyl-6-hydroxy-2-succinyl-cyclohex-3-ene-1-carboxylate + CO2. Its pathway is quinol/quinone metabolism; 1,4-dihydroxy-2-naphthoate biosynthesis; 1,4-dihydroxy-2-naphthoate from chorismate: step 2/7. It participates in quinol/quinone metabolism; menaquinone biosynthesis. Functionally, catalyzes the thiamine diphosphate-dependent decarboxylation of 2-oxoglutarate and the subsequent addition of the resulting succinic semialdehyde-thiamine pyrophosphate anion to isochorismate to yield 2-succinyl-5-enolpyruvyl-6-hydroxy-3-cyclohexene-1-carboxylate (SEPHCHC). The sequence is that of 2-succinyl-5-enolpyruvyl-6-hydroxy-3-cyclohexene-1-carboxylate synthase from Mycolicibacterium vanbaalenii (strain DSM 7251 / JCM 13017 / BCRC 16820 / KCTC 9966 / NRRL B-24157 / PYR-1) (Mycobacterium vanbaalenii).